A 203-amino-acid polypeptide reads, in one-letter code: LexA repressor (203 aa).

The H-T-H motif DNA-binding region spans 28 to 47 (IREIGDEFGITAKGAYDHLK). Residues S127 and K164 each act as for autocatalytic cleavage activity in the active site.

The protein belongs to the peptidase S24 family. In terms of assembly, homodimer.

The enzyme catalyses Hydrolysis of Ala-|-Gly bond in repressor LexA.. In terms of biological role, represses a number of genes involved in the response to DNA damage (SOS response), including recA and lexA. In the presence of single-stranded DNA, RecA interacts with LexA causing an autocatalytic cleavage which disrupts the DNA-binding part of LexA, leading to derepression of the SOS regulon and eventually DNA repair. The polypeptide is LexA repressor (Leptospira interrogans serogroup Icterohaemorrhagiae serovar copenhageni (strain Fiocruz L1-130)).